The following is a 221-amino-acid chain: Pre-hexon-linking protein VIII (221 aa).

Threonine 65 bears the Phosphothreonine; by host mark. Positions 113-150 (AAPWSGVKTGSFCGRGLQLAEPPTTAIYPSGLFHLGRG) are excised as a propeptide.

The protein belongs to the adenoviridae hexon-linking protein family. Interacts with the peripentonal hexons as well as the hexons in the facets. Part of a complex composed of the core-capsid bridging protein, the endosome lysis protein VI and the hexon-linking protein VIII; these interactions bridge the virus core to the capsid. Cleaved by the viral protease during virion maturation. May cause the middle segment to be shed from the capsid.

It is found in the virion. The protein localises to the host nucleus. In terms of biological role, structural component of the virion that acts as a cement protein on the capsid interior and which glue the peripentonal hexons and group-of-nine hexons together. The sequence is that of Pre-hexon-linking protein VIII from Sus scrofa (Pig).